The primary structure comprises 495 residues: Cytoplasmic alpha-amylase (495 aa).

Positions 104 and 198 each coordinate Ca(2+). The active-site Nucleophile is the D235. H239 serves as a coordination point for Ca(2+). E265 acts as the Proton donor in catalysis.

Belongs to the glycosyl hydrolase 13 family. In terms of assembly, monomer. Ca(2+) serves as cofactor.

It localises to the cytoplasm. The enzyme catalyses Endohydrolysis of (1-&gt;4)-alpha-D-glucosidic linkages in polysaccharides containing three or more (1-&gt;4)-alpha-linked D-glucose units.. In Escherichia coli (strain K12), this protein is Cytoplasmic alpha-amylase (amyA).